A 430-amino-acid polypeptide reads, in one-letter code: Gamma-glutamyl phosphate reductase (430 aa).

Belongs to the gamma-glutamyl phosphate reductase family.

The protein localises to the cytoplasm. The catalysed reaction is L-glutamate 5-semialdehyde + phosphate + NADP(+) = L-glutamyl 5-phosphate + NADPH + H(+). It participates in amino-acid biosynthesis; L-proline biosynthesis; L-glutamate 5-semialdehyde from L-glutamate: step 2/2. Its function is as follows. Catalyzes the NADPH-dependent reduction of L-glutamate 5-phosphate into L-glutamate 5-semialdehyde and phosphate. The product spontaneously undergoes cyclization to form 1-pyrroline-5-carboxylate. The protein is Gamma-glutamyl phosphate reductase of Methylococcus capsulatus (strain ATCC 33009 / NCIMB 11132 / Bath).